The primary structure comprises 141 residues: Endoribonuclease YbeY (141 aa).

Positions 105, 109, and 115 each coordinate Zn(2+).

This sequence belongs to the endoribonuclease YbeY family. The cofactor is Zn(2+).

It localises to the cytoplasm. Its function is as follows. Single strand-specific metallo-endoribonuclease involved in late-stage 70S ribosome quality control and in maturation of the 3' terminus of the 16S rRNA. The polypeptide is Endoribonuclease YbeY (Chlorobaculum parvum (strain DSM 263 / NCIMB 8327) (Chlorobium vibrioforme subsp. thiosulfatophilum)).